Reading from the N-terminus, the 267-residue chain is Ribosomal RNA large subunit methyltransferase E (267 aa).

Gly50, Trp52, Asp68, Asp84, and Asp109 together coordinate S-adenosyl-L-methionine. Lys149 serves as the catalytic Proton acceptor. Positions 196-255 (PLKIDDKFDVTIKKIGAKGNGIAFVEDFVVFMQDEVKKGENVRIKIVDVKPEFAFAIVIG) constitute a TRAM domain.

It belongs to the class I-like SAM-binding methyltransferase superfamily. RNA methyltransferase RlmE family.

Its subcellular location is the cytoplasm. It catalyses the reaction uridine(2552) in 23S rRNA + S-adenosyl-L-methionine = 2'-O-methyluridine(2552) in 23S rRNA + S-adenosyl-L-homocysteine + H(+). Functionally, specifically methylates the uridine in position 2552 of 23S rRNA at the 2'-O position of the ribose in the fully assembled 50S ribosomal subunit. This is Ribosomal RNA large subunit methyltransferase E from Methanococcoides burtonii (strain DSM 6242 / NBRC 107633 / OCM 468 / ACE-M).